The chain runs to 391 residues: Thioredoxin-interacting protein (391 aa).

Lys212 participates in a covalent cross-link: Glycyl lysine isopeptide (Lys-Gly) (interchain with G-Cter in ubiquitin). Ser361 bears the Phosphoserine mark.

It belongs to the arrestin family. In terms of assembly, homodimer; disulfide-linked. Interacts with TXN/thioredoxin through its redox-active site. Interacts with transcriptional repressors ZBTB16, ZBTB32 and HDAC1. Interacts with DDIT4. In terms of processing, ubiquitinated; undergoes heterotypic 'Lys-48'-/'Lys-63'-branched polyubiquitination catalyzed by ITCH and UBR5 resulting in proteasomal degradation. Deubiquitinated by USP5, leading to TXNIP stabilization.

It localises to the cytoplasm. May act as an oxidative stress mediator by inhibiting thioredoxin activity or by limiting its bioavailability. Interacts with COPS5 and restores COPS5-induced suppression of CDKN1B stability, blocking the COPS5-mediated translocation of CDKN1B from the nucleus to the cytoplasm. Functions as a transcriptional repressor, possibly by acting as a bridge molecule between transcription factors and corepressor complexes, and over-expression will induce G0/G1 cell cycle arrest. Required for the maturation of natural killer cells. Acts as a suppressor of tumor cell growth. Inhibits the proteasomal degradation of DDIT4, and thereby contributes to the inhibition of the mammalian target of rapamycin complex 1 (mTORC1). This is Thioredoxin-interacting protein (TXNIP) from Pongo abelii (Sumatran orangutan).